Reading from the N-terminus, the 480-residue chain is Type VI lipase adapter protein Tla3 (480 aa).

The interval 410–458 is disordered; sequence ISSPTPGKKPVHDPFGVDLLPQTASGDGPPPSADPVAPASRLTTRLPPG.

As to quaternary structure, interacts with the Tle3 toxin on one side and with the H2-T6SS component VgrG2b on the other side.

It localises to the cytoplasm. Adapter protein that targets and loads the Tle3 toxin onto the H2 type VI secretion system (H2-T6SS) machinery through an interaction with the TTR domain of VgrG2b. Seems specific for Tle3. This Pseudomonas aeruginosa (strain ATCC 15692 / DSM 22644 / CIP 104116 / JCM 14847 / LMG 12228 / 1C / PRS 101 / PAO1) protein is Type VI lipase adapter protein Tla3.